Here is a 292-residue protein sequence, read N- to C-terminus: GTP cyclohydrolase FolE2 (292 aa).

The protein belongs to the GTP cyclohydrolase IV family.

The enzyme catalyses GTP + H2O = 7,8-dihydroneopterin 3'-triphosphate + formate + H(+). The protein operates within cofactor biosynthesis; 7,8-dihydroneopterin triphosphate biosynthesis; 7,8-dihydroneopterin triphosphate from GTP: step 1/1. Functionally, converts GTP to 7,8-dihydroneopterin triphosphate. In Staphylococcus epidermidis (strain ATCC 12228 / FDA PCI 1200), this protein is GTP cyclohydrolase FolE2.